Reading from the N-terminus, the 179-residue chain is UPF0227 protein Ssed_2836 (179 aa).

The protein belongs to the UPF0227 family.

The chain is UPF0227 protein Ssed_2836 from Shewanella sediminis (strain HAW-EB3).